A 513-amino-acid chain; its full sequence is MTRVINLDGESLTIEDVIAIARQGVACHIDDSAIEAVNASRKIVDDIVSEKRVVYGVTTGFGSLCNVSISPEDTVQLQENLIRTHASGFGDPLPEDAVRAIMLIRINSLVKGYSGIRLSTIEKLLELLNKGVHPYIPEKGSLGASGDLAPLAHMVLPMLGLGKAYYKGELLSGQEALDKAGIDKISLAAKEGLALINGTTVLTAVGALATYDAIQLLKLSDLAGALSLEVHNGITSPFEENLHTIRPQSGQLATARNIRNLLEGSQNTTVATQSRVQDPYTLRCMPQIHGASKDSIAYVKSKVDIEINSVTDNPIICKDGHVISGGNFHGEPMAQPFDFLGIAISEIGNVSERRVERLVNSQLSKLPSFLVKYPGLNSGFMITQYACASLASENKVLAHPASVDSIPSCENQEDFVSMGTTAARKAFEILKNSRRIVATEIMAACQALDLKPENHELGKGTKVAYDLFRKEVNFIEHDKHIEIYDELNKASAVIEDPSFLEAVEQAVELSIQF.

Positions 144-146 form a cross-link, 5-imidazolinone (Ala-Gly); the sequence is ASG. A 2,3-didehydroalanine (Ser) modification is found at S145.

The protein belongs to the PAL/histidase family. Contains an active site 4-methylidene-imidazol-5-one (MIO), which is formed autocatalytically by cyclization and dehydration of residues Ala-Ser-Gly.

Its subcellular location is the cytoplasm. It carries out the reaction L-histidine = trans-urocanate + NH4(+). It functions in the pathway amino-acid degradation; L-histidine degradation into L-glutamate; N-formimidoyl-L-glutamate from L-histidine: step 1/3. This is Histidine ammonia-lyase from Streptococcus pyogenes serotype M1.